A 267-amino-acid polypeptide reads, in one-letter code: tRNA pseudouridine synthase A (267 aa).

D51 serves as the catalytic Nucleophile. Position 109 (Y109) interacts with substrate.

The protein belongs to the tRNA pseudouridine synthase TruA family. Homodimer.

It catalyses the reaction uridine(38/39/40) in tRNA = pseudouridine(38/39/40) in tRNA. Formation of pseudouridine at positions 38, 39 and 40 in the anticodon stem and loop of transfer RNAs. This Staphylococcus aureus (strain USA300) protein is tRNA pseudouridine synthase A.